The chain runs to 2871 residues: Fibrillin-1 (2871 aa).

Positions Met-1–Gly-24 are cleaved as a signal peptide. A propeptide spanning residues Ala-25–Arg-44 is cleaved from the precursor. Residues Arg-45–Ile-81 are fibrillin unique N-terminal (FUN) domain. Residues Arg-45–Thr-450 are N-terminal domain. 11 disulfide bridges follow: Cys-59–Cys-68, Cys-67–Cys-80, Cys-85–Cys-94, Cys-89–Cys-100, Cys-102–Cys-111, Cys-119–Cys-129, Cys-123–Cys-134, Cys-136–Cys-145, Cys-150–Cys-160, Cys-154–Cys-166, and Cys-168–Cys-177. 3 EGF-like domains span residues Ile-81–Gly-112, Ser-115–Gly-146, and Gln-147–Glu-178. Residues Cys-119–Ile-329 are interaction with MFAP4. In terms of domain architecture, TB 1 spans Gly-184–Ile-236. Residues Cys-195 to Cys-221 form a hybrid domain 1 region. The EGF-like 4; calcium-binding domain occupies Asp-246–Glu-287. 6 cysteine pairs are disulfide-bonded: Cys-250–Cys-262, Cys-257–Cys-271, Cys-273–Cys-286, Cys-292–Cys-304, Cys-299–Cys-313, and Cys-315–Cys-328. O-linked (Glc) serine glycosylation occurs at Ser-268. An EGF-like 5; calcium-binding domain is found at Asp-288 to Ile-329. The TB 2 domain maps to Gly-334 to Cys-389. Asn-448 carries N-linked (GlcNAc...) asparagine glycosylation. One can recognise an EGF-like 6 domain in the interval Val-449 to Ile-489. Disulfide bonds link Cys-453–Cys-465, Cys-460–Cys-474, Cys-476–Cys-488, Cys-494–Cys-504, Cys-499–Cys-513, Cys-515–Cys-528, Cys-534–Cys-546, Cys-541–Cys-555, Cys-557–Cys-570, Cys-576–Cys-587, Cys-582–Cys-596, Cys-598–Cys-611, Cys-617–Cys-628, Cys-623–Cys-637, and Cys-639–Cys-652. Ser-471 carries O-linked (Glc) serine glycosylation. One can recognise an EGF-like 7; calcium-binding domain in the interval Asp-490–Arg-529. Ser-510 carries an O-linked (Glc) serine glycan. One can recognise an EGF-like 8; calcium-binding domain in the interval Asp-530–Glu-571. Ser-552 is a glycosylation site (O-linked (Glc) serine). The EGF-like 9; calcium-binding domain occupies Asp-572 to Lys-612. An O-linked (Glc) serine glycan is attached at Ser-593. One can recognise an EGF-like 10; calcium-binding domain in the interval Asp-613 to Val-653. Residue Ser-634 is glycosylated (O-linked (Glc) serine). The 53-residue stretch at Ser-659–Cys-711 folds into the TB 3 domain. The region spanning Asp-723–Val-764 is the EGF-like 11; calcium-binding domain. Cystine bridges form between Cys-727–Cys-739, Cys-734–Cys-748, Cys-750–Cys-763, Cys-769–Cys-781, Cys-776–Cys-790, Cys-792–Cys-805, Cys-811–Cys-821, Cys-816–Cys-830, Cys-832–Cys-845, Cys-853–Cys-875, Cys-862–Cys-887, Cys-876–Cys-890, Cys-896–Cys-908, Cys-914–Cys-926, Cys-921–Cys-935, and Cys-937–Cys-950. Residues Asp-765 to Glu-806 form the EGF-like 12; calcium-binding domain. Residue Ser-787 is glycosylated (O-linked (Glc) serine). The region spanning Asp-807 to Ile-846 is the EGF-like 13; calcium-binding domain. Residue Ser-827 is glycosylated (O-linked (Glc) serine). One can recognise a TB 4 domain in the interval Gly-851 to Arg-902. The hybrid domain 2 stretch occupies residues Cys-862–Cys-887. Residues Asp-910–Leu-951 enclose the EGF-like 14; calcium-binding domain. The 53-residue stretch at Glu-956 to Cys-1008 folds into the TB 5 domain. The 42-residue stretch at Asp-1028–Thr-1069 folds into the EGF-like 15; calcium-binding domain. 46 cysteine pairs are disulfide-bonded: Cys-1032–Cys-1044, Cys-1039–Cys-1053, Cys-1055–Cys-1068, Cys-1074–Cys-1086, Cys-1081–Cys-1095, Cys-1097–Cys-1111, Cys-1117–Cys-1129, Cys-1124–Cys-1138, Cys-1140–Cys-1153, Cys-1159–Cys-1171, Cys-1166–Cys-1180, Cys-1182–Cys-1195, Cys-1201–Cys-1212, Cys-1208–Cys-1221, Cys-1223–Cys-1236, Cys-1242–Cys-1254, Cys-1249–Cys-1263, Cys-1265–Cys-1278, Cys-1284–Cys-1296, Cys-1291–Cys-1305, Cys-1307–Cys-1320, Cys-1326–Cys-1339, Cys-1333–Cys-1348, Cys-1350–Cys-1361, Cys-1367–Cys-1380, Cys-1374–Cys-1389, Cys-1391–Cys-1402, Cys-1408–Cys-1420, Cys-1415–Cys-1429, Cys-1431–Cys-1444, Cys-1450–Cys-1461, Cys-1456–Cys-1470, Cys-1472–Cys-1485, Cys-1491–Cys-1502, Cys-1497–Cys-1511, Cys-1513–Cys-1526, Cys-1534–Cys-1562, Cys-1549–Cys-1574, Cys-1563–Cys-1577, Cys-1564–Cys-1589, Cys-1610–Cys-1622, Cys-1617–Cys-1631, Cys-1633–Cys-1646, Cys-1652–Cys-1663, Cys-1658–Cys-1672, and Cys-1674–Cys-1687. An O-linked (Glc) serine glycan is attached at Ser-1050. A glycan (N-linked (GlcNAc...) asparagine) is linked at Asn-1067. The region spanning Asp-1070–Met-1112 is the EGF-like 16; calcium-binding domain. In terms of domain architecture, EGF-like 17; calcium-binding spans Asp-1113–Ile-1154. Ser-1135 is a glycosylation site (O-linked (Glc) serine). Residue Asn-1149 is glycosylated (N-linked (GlcNAc...) asparagine). Residues Asp-1155–Val-1196 form the EGF-like 18; calcium-binding domain. The EGF-like 19; calcium-binding domain occupies Asp-1197 to Thr-1237. Ser-1218 carries O-linked (Glc) serine glycosylation. In terms of domain architecture, EGF-like 20; calcium-binding spans Asp-1238–Val-1279. In terms of domain architecture, EGF-like 21; calcium-binding spans Asp-1280–Thr-1321. O-linked (Glc) serine glycosylation occurs at Ser-1302. The EGF-like 22; calcium-binding domain occupies Asp-1322 to Thr-1362. The O-linked (Glc) serine glycan is linked to Ser-1345. An EGF-like 23; calcium-binding domain is found at Asp-1363–Thr-1403. An N-linked (GlcNAc...) asparagine glycan is attached at Asn-1369. A glycan (O-linked (Glc) serine) is linked at Ser-1386. The 42-residue stretch at Asp-1404–Glu-1445 folds into the EGF-like 24; calcium-binding domain. The EGF-like 25; calcium-binding domain maps to Asp-1446–Thr-1486. N-linked (GlcNAc...) asparagine glycosylation is present at Asn-1484. The EGF-like 26; calcium-binding domain occupies Asp-1487–Val-1527. O-linked (Glc) serine glycosylation is present at Ser-1508. Residues Asp-1528–Arg-2731 are C-terminal domain. The region spanning Gly-1532–Cys-1589 is the TB 6 domain. A Cell attachment site motif is present at residues Arg-1541 to Asp-1543. An N-linked (GlcNAc...) asparagine glycan is attached at Asn-1581. The EGF-like 27; calcium-binding domain occupies Asp-1606 to Asp-1647. Ser-1628 is a glycosylation site (O-linked (Glc) serine). The EGF-like 28; calcium-binding domain maps to Asp-1648–Met-1688. Asn-1669 is a glycosylation site (N-linked (GlcNAc...) asparagine). In terms of domain architecture, TB 7 spans Ser-1693–Cys-1748. N-linked (GlcNAc...) asparagine glycans are attached at residues Asn-1703 and Asn-1713. The EGF-like 29; calcium-binding domain occupies Asp-1766–Glu-1807. Disulfide bonds link Cys-1770-Cys-1782, Cys-1777-Cys-1791, Cys-1793-Cys-1806, Cys-1812-Cys-1824, Cys-1818-Cys-1833, Cys-1835-Cys-1847, Cys-1853-Cys-1865, Cys-1860-Cys-1874, Cys-1876-Cys-1889, Cys-1895-Cys-1905, Cys-1900-Cys-1914, Cys-1916-Cys-1928, Cys-1934-Cys-1947, Cys-1942-Cys-1956, Cys-1958-Cys-1971, Cys-1977-Cys-1989, Cys-1984-Cys-1998, Cys-2000-Cys-2011, Cys-2017-Cys-2029, Cys-2024-Cys-2038, Cys-2040-Cys-2053, Cys-2061-Cys-2083, Cys-2070-Cys-2096, Cys-2084-Cys-2099, Cys-2085-Cys-2111, Cys-2131-Cys-2142, Cys-2137-Cys-2151, Cys-2153-Cys-2164, Cys-2170-Cys-2181, Cys-2176-Cys-2190, Cys-2192-Cys-2204, Cys-2210-Cys-2221, Cys-2217-Cys-2230, Cys-2232-Cys-2245, Cys-2251-Cys-2265, Cys-2258-Cys-2274, Cys-2276-Cys-2289, Cys-2295-Cys-2307, Cys-2302-Cys-2316, and Cys-2318-Cys-2331. Residues Asp-1808–Asn-1848 form the EGF-like 30; calcium-binding domain. O-linked (Glc) serine glycosylation occurs at Ser-1830. The 42-residue stretch at Asp-1849 to Leu-1890 folds into the EGF-like 31; calcium-binding domain. Ser-1871 is a glycosylation site (O-linked (Glc) serine). The EGF-like 32; calcium-binding domain maps to Asp-1891 to Ile-1929. A glycan (N-linked (GlcNAc...) asparagine) is linked at Asn-1902. The O-linked (Glc) serine glycan is linked to Ser-1911. The EGF-like 33; calcium-binding domain occupies Asp-1930–Val-1972. Residue Ser-1953 is glycosylated (O-linked (Glc) serine). Residues Asp-1973 to Glu-2012 form the EGF-like 34; calcium-binding domain. Residues Asp-2013–Gln-2054 form the EGF-like 35; calcium-binding domain. Residue Ser-2035 is glycosylated (O-linked (Glc) serine). One can recognise a TB 8 domain in the interval Ser-2059 to Cys-2111. N-linked (GlcNAc...) asparagine glycosylation is present at Asn-2077. In terms of domain architecture, EGF-like 36; calcium-binding spans Asp-2127–Val-2165. An O-linked (Glc) serine glycan is attached at Ser-2148. In terms of domain architecture, EGF-like 37; calcium-binding spans Asp-2166–Glu-2205. Residue Asn-2178 is glycosylated (N-linked (GlcNAc...) asparagine). Positions Asp-2206–Lys-2246 constitute an EGF-like 38; calcium-binding domain. Residue Ser-2227 is glycosylated (O-linked (Glc) serine). The region spanning Asp-2247–Val-2290 is the EGF-like 39; calcium-binding domain. The EGF-like 40; calcium-binding domain maps to Asp-2291–Leu-2332. The O-linked (Glc) serine glycan is linked to Ser-2313. A TB 9 domain is found at Gly-2337–Cys-2390. The region spanning Asp-2402 to Val-2443 is the EGF-like 41; calcium-binding domain. 21 disulfide bridges follow: Cys-2406/Cys-2418, Cys-2413/Cys-2427, Cys-2429/Cys-2442, Cys-2448/Cys-2459, Cys-2455/Cys-2468, Cys-2470/Cys-2483, Cys-2489/Cys-2500, Cys-2496/Cys-2509, Cys-2511/Cys-2522, Cys-2528/Cys-2541, Cys-2535/Cys-2550, Cys-2552/Cys-2565, Cys-2571/Cys-2581, Cys-2577/Cys-2590, Cys-2592/Cys-2605, Cys-2611/Cys-2622, Cys-2617/Cys-2631, Cys-2633/Cys-2646, Cys-2652/Cys-2663, Cys-2659/Cys-2672, and Cys-2674/Cys-2686. The EGF-like 42; calcium-binding domain occupies Asp-2444–Lys-2484. The O-linked (Glc) serine glycan is linked to Ser-2465. Positions Asp-2485–Ile-2523 constitute an EGF-like 43; calcium-binding domain. Positions Asp-2524 to Glu-2566 constitute an EGF-like 44; calcium-binding domain. The O-linked (Glc) serine glycan is linked to Ser-2547. Positions Asp-2567–Val-2606 constitute an EGF-like 45; calcium-binding domain. Positions Asp-2607–Gln-2647 constitute an EGF-like 46; calcium-binding domain. Ser-2628 is a glycosylation site (O-linked (Glc) serine). The EGF-like 47; calcium-binding domain maps to Asp-2648 to Val-2687. Ser-2702 carries the post-translational modification Phosphoserine; by FAM20C. Phosphoserine is present on Ser-2709. The tract at residues Arg-2726–Glu-2746 is disordered. A glycan (N-linked (GlcNAc...) asparagine) is linked at Asn-2734. Polar residues predominate over residues Glu-2735–Glu-2746. N-linked (GlcNAc...) asparagine glycosylation is found at Asn-2750 and Asn-2767.

This sequence belongs to the fibrillin family. As to quaternary structure, interacts with COL16A1. Interacts with integrin alpha-V/beta-3. Interacts with ADAMTS10; this interaction promotes microfibril assembly. Interacts with THSD4; this interaction promotes fibril formation. Interacts (via N-terminal domain) with FBLN2 and FBLN5. Interacts with ELN. Forms a ternary complex with ELN and FBLN2 or FBLN5 and a significant interaction with ELN seen only in the presence of FBLN2 or FBLN5. Interacts (via N-terminal domain) with LTBP2 (via C-terminal domain) in a Ca(+2)-dependent manner. Interacts (via N-terminal domain) with LTBP1 (via C-terminal domain). Interacts with integrins ITGA5:ITGB1, ITGAV:ITGB3 and ITGAV:ITGB6. Interacts (via N-terminal domain) with BMP2, BMP4, BMP7, BMP10 and GDF5. Interacts (via N-terminal domain) with MFAP2 and MFAP5. Interacts with ADAMTSL5. Interacts with MFAP4. Interacts (via N-terminal domain) with TNFSF11 in a Ca(+2)-dependent manner. Interacts (via N-terminal domain) with EFEMP2; this interaction inhibits EFEMP2 binding to LOX and ELN. In terms of processing, cleavage of N- and C-terminus by furin is required for incorporation into the extracellular matrix and assembly into microfibrils. The C-terminus, which corresponds to the Asprosin chain, was initially thought to constitute a propeptide. Fibrillin-1 and Asprosin chains are still linked together during the secretion from cells, but are subsequently separated by furin, an essential step for incorporation of Fibrillin-1 into the nascent microfibrils. Forms intermolecular disulfide bonds either with other fibrillin-1 molecules or with other components of the microfibrils. Post-translationally, O-glycosylated on serine residues by POGLUT2 and POGLUT3 which is necessary for efficient protein secretion.

The protein localises to the secreted. Its subcellular location is the extracellular space. It is found in the extracellular matrix. Structural component of the 10-12 nm diameter microfibrils of the extracellular matrix, which conveys both structural and regulatory properties to load-bearing connective tissues. Fibrillin-1-containing microfibrils provide long-term force bearing structural support. In tissues such as the lung, blood vessels and skin, microfibrils form the periphery of the elastic fiber, acting as a scaffold for the deposition of elastin. In addition, microfibrils can occur as elastin-independent networks in tissues such as the ciliary zonule, tendon, cornea and glomerulus where they provide tensile strength and have anchoring roles. Fibrillin-1 also plays a key role in tissue homeostasis through specific interactions with growth factors, such as the bone morphogenetic proteins (BMPs), growth and differentiation factors (GDFs) and latent transforming growth factor-beta-binding proteins (LTBPs), cell-surface integrins and other extracellular matrix protein and proteoglycan components. Regulates osteoblast maturation by controlling TGF-beta bioavailability and calibrating TGF-beta and BMP levels, respectively. Negatively regulates osteoclastogenesis by binding and sequestering an osteoclast differentiation and activation factor TNFSF11. This leads to disruption of TNFSF11-induced Ca(2+) signaling and impairment of TNFSF11-mediated nuclear translocation and activation of transcription factor NFATC1 which regulates genes important for osteoclast differentiation and function. Mediates cell adhesion via its binding to cell surface receptors integrins ITGAV:ITGB3 and ITGA5:ITGB1. Binds heparin and this interaction has an important role in the assembly of microfibrils. Its function is as follows. Adipokine secreted by white adipose tissue that plays an important regulatory role in the glucose metabolism of liver, muscle and pancreas. Hormone that targets the liver in response to fasting to increase plasma glucose levels. Binds the olfactory receptor OR4M1 at the surface of hepatocytes and promotes hepatocyte glucose release by activating the protein kinase A activity in the liver, resulting in rapid glucose release into the circulation. May act as a regulator of adaptive thermogenesis by inhibiting browning and energy consumption, while increasing lipid deposition in white adipose tissue. Also acts as an orexigenic hormone that increases appetite: crosses the blood brain barrier and exerts effects on the hypothalamus. In the arcuate nucleus of the hypothalamus, asprosin directly activates orexigenic AgRP neurons and indirectly inhibits anorexigenic POMC neurons, resulting in appetite stimulation. Activates orexigenic AgRP neurons via binding to the olfactory receptor OR4M1. May also play a role in sperm motility in testis via interaction with OR4M1 receptor. The polypeptide is Fibrillin-1 (Homo sapiens (Human)).